A 267-amino-acid polypeptide reads, in one-letter code: MSLFHLILVALIQGITEFLPVSSSGHLILLPALTGLEDQGQVIDVAVHVGTLGAVVLYFWRDVRDGLAGLPRALTGRLDTPGARLAMGLIVATIPTVLAGAALHFTGLSDALRSITVIGWTMLLFGLLLWWADRTGAQVKEATDWSLRDALILGLWQAVALIPGTSRSGITITGARAMGYTRSDGARISMLMSIPTIIASGVLLGADVAVTSDAQAARDGAIAAAFAFVSALLALSLMMRLLRSVSFTPYVIYRLALGLVLLGIAYS.

Transmembrane regions (helical) follow at residues 1–21, 40–60, 85–105, 111–131, 190–210, 219–239, and 245–265; these read MSLFHLILVALIQGITEFLPV, GQVIDVAVHVGTLGAVVLYFW, LAMGLIVATIPTVLAGAALHF, ALRSITVIGWTMLLFGLLLWW, MLMSIPTIIASGVLLGADVAV, DGAIAAAFAFVSALLALSLMM, and VSFTPYVIYRLALGLVLLGIA.

Belongs to the UppP family.

It is found in the cell inner membrane. It catalyses the reaction di-trans,octa-cis-undecaprenyl diphosphate + H2O = di-trans,octa-cis-undecaprenyl phosphate + phosphate + H(+). Functionally, catalyzes the dephosphorylation of undecaprenyl diphosphate (UPP). Confers resistance to bacitracin. The sequence is that of Undecaprenyl-diphosphatase from Ruegeria pomeroyi (strain ATCC 700808 / DSM 15171 / DSS-3) (Silicibacter pomeroyi).